The sequence spans 71 residues: Putative membrane protein insertion efficiency factor (71 aa).

This sequence belongs to the UPF0161 family.

Its subcellular location is the cell membrane. Its function is as follows. Could be involved in insertion of integral membrane proteins into the membrane. This is Putative membrane protein insertion efficiency factor from Acetivibrio thermocellus (strain ATCC 27405 / DSM 1237 / JCM 9322 / NBRC 103400 / NCIMB 10682 / NRRL B-4536 / VPI 7372) (Clostridium thermocellum).